Consider the following 329-residue polypeptide: DNA-directed RNA polymerase subunit alpha (329 aa).

The alpha N-terminal domain (alpha-NTD) stretch occupies residues 1-235; it reads MQGSVTEFLK…EQLDAFVDLR (235 aa). Positions 249–329 are alpha C-terminal domain (alpha-CTD); it reads FDPILLRPVD…NWPPASIAED (81 aa).

This sequence belongs to the RNA polymerase alpha chain family. Homodimer. The RNAP catalytic core consists of 2 alpha, 1 beta, 1 beta' and 1 omega subunit. When a sigma factor is associated with the core the holoenzyme is formed, which can initiate transcription.

It catalyses the reaction RNA(n) + a ribonucleoside 5'-triphosphate = RNA(n+1) + diphosphate. Its function is as follows. DNA-dependent RNA polymerase catalyzes the transcription of DNA into RNA using the four ribonucleoside triphosphates as substrates. The chain is DNA-directed RNA polymerase subunit alpha from Actinobacillus succinogenes (strain ATCC 55618 / DSM 22257 / CCUG 43843 / 130Z).